Consider the following 120-residue polypeptide: Large ribosomal subunit protein bL20 (120 aa).

It belongs to the bacterial ribosomal protein bL20 family.

Functionally, binds directly to 23S ribosomal RNA and is necessary for the in vitro assembly process of the 50S ribosomal subunit. It is not involved in the protein synthesizing functions of that subunit. The chain is Large ribosomal subunit protein bL20 from Mesoplasma florum (strain ATCC 33453 / NBRC 100688 / NCTC 11704 / L1) (Acholeplasma florum).